Consider the following 685-residue polypeptide: Amino acid transporter heavy chain SLC3A1 (685 aa).

The segment covering 1–10 has biased composition (basic and acidic residues); sequence MDEDKGKRDP. The segment at 1-53 is disordered; sequence MDEDKGKRDPIQMSLKGCRTNNGFVQNEDIPEQDPDPGSRDTPQPNAVSIPAP. The Cytoplasmic segment spans residues 1-88; that stretch reads MDEDKGKRDP…ARYRVPREIL (88 aa). The helical; Signal-anchor for type II membrane protein transmembrane segment at 89-109 threads the bilayer; it reads FWLTVVSVFLLIGATIAIIVI. Over 110–685 the chain is Extracellular; that stretch reads SPKCLDWWQA…SALDILYSSC (576 aa). Residue asparagine 213 coordinates Ca(2+). N-linked (GlcNAc...) asparagine glycosylation is found at asparagine 213, asparagine 240, and asparagine 260. An intrachain disulfide couples cysteine 241 to cysteine 272. Ca(2+) contacts are provided by aspartate 283, phenylalanine 317, leucine 318, and glutamate 320. An N-linked (GlcNAc...) asparagine glycan is attached at asparagine 331. Serine 385 carries the post-translational modification Phosphoserine. Residues asparagine 512 and asparagine 522 are each glycosylated (N-linked (GlcNAc...) asparagine). 2 cysteine pairs are disulfide-bonded: cysteine 570-cysteine 666 and cysteine 673-cysteine 685.

Disulfide-linked heterodimer composed of the catalytic light subunit SLC7A9 and the heavy subunit SLC3A1. The heterodimer is the minimal functional unit. Assembles in non-covalently linked heterotetramers (dimers of heterodimers) and higher order oligomers; the oligomerization is mediated by SLC3A1 likely to prevent degradation in the endoplasmic reticulum and facilitate heteromer trafficking to the plasma membrane. Disulfide-linked heterodimer composed of the catalytic light subunit SLC7A13 and the heavy subunit SLC3A1. As to expression, expressed in the brush border membrane in the kidney (at protein level). Highly expressed in renal tubules in the outer stripe of the outer medulla and medullary ray (at protein level). Also detected in the renal cortex. More abundant in male than female kidneys.

The protein resides in the cell membrane. The protein localises to the apical cell membrane. Functionally, acts as a chaperone that facilitates biogenesis and trafficking of functional transporter heteromers to the plasma membrane. Associates with SLC7A9 to form a functional transporter complex that mediates the electrogenic exchange between cationic amino acids and neutral amino acids, with a stoichiometry of 1:1. SLC7A9-SLC3A1 transporter has system b(0,+)-like activity with high affinity for extracellular cationic amino acids and L-cystine and lower affinity for intracellular neutral amino acids. Substrate exchange is driven by high concentration of intracellular neutral amino acids and the intracellular reduction of L-cystine to L-cysteine. SLC7A9-SLC3A1 acts as a major transporter for reabsorption of L-cystine and dibasic amino acids across the brush border membrane in early proximal tubules. Associates with SLC7A13 to form a functional complex that transports anionic and neutral amino acids via exchange or facilitated diffusion. SLC7A13-SLC3A1 may act as a major transporter for L-cystine in late proximal tubules, ensuring its reabsorption from the luminal fluid in exchange for cytosolic L-glutamate or L-aspartate. The protein is Amino acid transporter heavy chain SLC3A1 of Mus musculus (Mouse).